Here is a 622-residue protein sequence, read N- to C-terminus: Auxin efflux carrier component 1 (622 aa).

At 1-6 (MITAAD) the chain is on the extracellular side. Residues 7 to 27 (FYHVMTAMVPLYVAMILAYGS) form a helical membrane-spanning segment. At 28-44 (VKWWKIFTPDQCSGINR) the chain is on the cytoplasmic side. A helical membrane pass occupies residues 45–65 (FVALFAVPLLSFHFIAANNPY). Val-51 is a (indol-3-yl)acetate binding site. At 66 to 70 (AMNLR) the chain is on the extracellular side. Residues 71–91 (FLAADSLQKVIVLSLLFLWCK) form a helical membrane-spanning segment. Topologically, residues 92 to 100 (LSRNGSLDW) are cytoplasmic. The helical transmembrane segment at 101–121 (TITLFSLSTLPNTLVMGIPLL) threads the bilayer. Asn-112 and Leu-114 together coordinate (indol-3-yl)acetate. Residues 122–131 (KGMYGNFSGD) lie on the Extracellular side of the membrane. N-linked (GlcNAc...) asparagine glycosylation is present at Asn-127. A helical membrane pass occupies residues 132–152 (LMVQIVVLQCIIWYTLMLFLF). Tyr-145 is a (indol-3-yl)acetate binding site. Residues 153 to 482 (EYRGAKLLIS…LIRNPNSYSS (330 aa)) are Cytoplasmic-facing. A phosphoserine mark is found at Ser-209, Ser-212, Ser-221, and Ser-225. The interval 213-233 (RSDIYSRRSQGLSATPRPSNL) is disordered. Position 227 is a phosphothreonine (Thr-227). Residue Ser-231 is modified to Phosphoserine. Thr-248 carries the phosphothreonine modification. Residues Ser-252, Ser-253, and Ser-271 each carry the phosphoserine modification. Positions 268–362 (GRNSNFGPGE…PVVGGKRQDG (95 aa)) are disordered. Thr-286 is subject to Phosphothreonine. Ser-290 is subject to Phosphoserine. Residues 298–311 (PAKPTAAGTAAGAG) show a composition bias toward low complexity. Thr-302 carries the post-translational modification Phosphothreonine. A phosphoserine mark is found at Ser-317, Ser-320, and Ser-337. Phosphothreonine is present on Thr-340. Phosphoserine is present on residues Ser-374, Ser-377, Ser-408, Ser-414, Ser-426, Ser-434, and Ser-446. A helical membrane pass occupies residues 483-503 (LFGITWSLISFKWNIEMPALI). Topologically, residues 504–506 (AKS) are extracellular. The chain crosses the membrane as a helical span at residues 507–527 (ISILSDAGLGMAMFSLGLFMA). Topologically, residues 528-541 (LNPRIIACGNRRAA) are cytoplasmic. The chain crosses the membrane as a helical span at residues 542 to 562 (FAAAMRFVVGPAVMLVASYAV). The Extracellular segment spans residues 563 to 566 (GLRG). The chain crosses the membrane as a helical span at residues 567–587 (VLLHVAIIQAALPQGIVPFVF). 2 residues coordinate (indol-3-yl)acetate: Ile-582 and Val-583. Residues 588–601 (AKEYNVHPDILSTA) are Cytoplasmic-facing. Residues 602–622 (VIFGMLIALPITLLYYILLGL) form a helical membrane-spanning segment.

This sequence belongs to the auxin efflux carrier (TC 2.A.69.1) family. Homodimer. Interacts with TOPP4. Interacts with FYPP1 and FYPP3. Component of a complex made of PINs (e.g. PIN1 and PIN2), MAB4/MELs (e.g. NPY1/MAB4 and NPY5/MEL1) and AGC kinases (e.g. D6PK and PID) at the plasma membrane. Binds directly to NPY5/MEL1. As to expression, expressed at the basal side of elongated parenchymatous xylem cells.

The protein resides in the cell membrane. Its activity is regulated as follows. Auxin efflux carrier activity is competitively inhibited by naptalamate (N-1-naphthylphthalamic acid, NPA) but activated by D6PK-mediated phosphorylation. Functionally, acts as a component of the auxin efflux carrier; this activity is enhanced when activated by D6PK-mediated phosphorylation. Binds auxins including indole-3-acetic acid (IAA), indole-3-butyric acid (IBA), indole-3-propionic acid (IPA) and 4-chloroindole-3-acetic acid (4-Cl-IAA). Seems to be involved in the basipetal auxin transport. Mediates the formation of auxin gradient which is required to ensure correct organogenesis. Coordinated polar localization of PIN1 is directly regulated by the vesicle trafficking process and apical-basal PIN1 polarity also depends on the phosphorylation of conserved serine residues by PID kinase. The ARF-GEF protein GNOM is required for the correct recycling of PIN1 between the plasma membrane and endosomal compartments. Recrutes NPY proteins (e.g. NPY1/MAB4 and NPY5/MEL1) to the plasma membrane in a polar basal localization in root epidermis; this activity is optimized by AGC kinases-mediated (e.g. D6PK and PID) phosphorylation that limits their lateral diffusion-based escape. The sequence is that of Auxin efflux carrier component 1 from Arabidopsis thaliana (Mouse-ear cress).